The chain runs to 431 residues: MAYSTQRSEQLFTAAQQSIPGGVNSPVRAFNGVGGTPRFIAKADGAYLFDVDGNRYIDYVGSWGPMLLGHNHPAIKAAVLAAVENGLSYGAPTESEVLMAEMIRQIMPDMEMVRMVNSGTEATMSAIRLARGYTGRDKIVKFEGCYHGHADCLLVKAGSGALTLGQPNSPGVPADFAKHTLTCTYNDLASVEATFASYGSEIACIIVEPVAGNMNCIPPVPGFLEGLRAICDKYGALLIIDEVMTGFRVSLQGAQGYYGITPDLTTLGKIIGGGMPVGAFGGKKEIMAYIAPTGPVYQAGTLSGNPVAMAAGLAMLKAIQQPGLYDTLAEKTRQVAEGLKAAAAKQGIPLTVNYVGAMFGFFFTDEPEITRFEQVSRCDIDAFRRFYHLMLQEGVYLAPSAYEAGFLSLAHSEADIAETLAAAERCFAQMK.

Lysine 269 is modified (N6-(pyridoxal phosphate)lysine).

The protein belongs to the class-III pyridoxal-phosphate-dependent aminotransferase family. HemL subfamily. In terms of assembly, homodimer. Requires pyridoxal 5'-phosphate as cofactor.

The protein localises to the cytoplasm. The catalysed reaction is (S)-4-amino-5-oxopentanoate = 5-aminolevulinate. It functions in the pathway porphyrin-containing compound metabolism; protoporphyrin-IX biosynthesis; 5-aminolevulinate from L-glutamyl-tRNA(Glu): step 2/2. The protein is Glutamate-1-semialdehyde 2,1-aminomutase of Tolumonas auensis (strain DSM 9187 / NBRC 110442 / TA 4).